The primary structure comprises 977 residues: MAADSVQNDARGPMVSGRLDFDQNLDFSDTMVQKNLDEIKDQIKREIRKELKIKEGAENLRKVTTDKKSLAYVDNMLKKSNKKVEELHQELQELNAHIVVKDPEEVEEYPLTPDTPKSETRMSTNSNRLAALKKQADIELKVKQGAEDMIQMYSNGSSKDRKLLAAAQQMLQDSKTKIEFIRMQILKASQTSEINYENNDVTTSKPIISPLDLRIEELRHHYRIESAVADGAKNVMKLLGTGKVTEKKAHSEAQARLNESSQKLDLLKFSLEQRLSELPKNHPKGTLIMEELAMVASPPNSPRQSIMSTSNQYSTVAKPAALTGTLDVRLMGCQDLLENVPGRSKTASVSLPGWSPSEARSSFMSRGNKNKSGSSRTLSKSDDLSNEISAVLKLDNTVVGQTHWKPVSNQSWDQKFTLELDRSRELEIAVYWRDWRSLCAVKFLRLEDFLDNQRHGMCLYLEPQGTLFAEVTFFNPVIERRPKLQRQKKIFSKQQGKTFLRAPQMNINIATWGRLVRRAIPSVNTSFSPQAADLGSAMSHETAPMGHPDAHSLPSDPTVTKLDFDKAVTPPSKRNSIEVEIEETAPPDKISDGKEVQDALATFDFLNNTVAKPDYDSLVEHEQPGLELTEIQRKTEIREEEEVQFSLSDFKCVAVLGRGHFGKVLLADYKTTGEMFAIKALKKGDIVARDEVDSLMCEKRIFETVNSVRHPFLVNLFACFQTKEHVCFVMEYAAGGDLMMHIHADVFSETRSVFYAACVVLGLQFLHDHKIVYRDLKLDNLLLDTEGYVKIADFGLCKEGMGFKDRTSTFCGTPEFLAPEVLTETSYTRAVDWWGLGVLIFEMLVGESPFPGDDEEEVFDSIVNDEVRYPKYLSTEAISIMRRLLRRNPERRLGAGERDAEEVKRHPFFRDMDWPGLLAKKIRPPFVPTITSREDVSNFDDEFTSEAPILTPPREPRILTLGEQDLFADFDYIADWC.

3 REM-1 domains span residues 24-100 (NLDF…HIVV), 114-194 (DTPK…TSEI), and 200-280 (DVTT…ELPK). The C2 domain maps to 298–468 (PPNSPRQSIM…LYLEPQGTLF (171 aa)). Disordered regions lie at residues 342–381 (GRSK…LSKS) and 531–576 (AADL…KRNS). Residues 358-378 (EARSSFMSRGNKNKSGSSRTL) show a composition bias toward polar residues. A Protein kinase domain is found at 650-909 (FKCVAVLGRG…AEEVKRHPFF (260 aa)). ATP contacts are provided by residues 656-664 (LGRGHFGKV) and Lys-679. Asp-775 functions as the Proton acceptor in the catalytic mechanism. In terms of domain architecture, AGC-kinase C-terminal spans 910–977 (RDMDWPGLLA…ADFDYIADWC (68 aa)).

Belongs to the protein kinase superfamily. AGC Ser/Thr protein kinase family. PKC subfamily. Post-translationally, autophosphorylated. Phosphorylated. Proteolytically cleaved.

Its subcellular location is the cytoplasm. It is found in the nucleus. It localises to the membrane. The protein resides in the cell projection. The protein localises to the lamellipodium. Its subcellular location is the cytoskeleton. It is found in the cleavage furrow. It localises to the midbody. The protein resides in the cell junction. It carries out the reaction L-seryl-[protein] + ATP = O-phospho-L-seryl-[protein] + ADP + H(+). It catalyses the reaction L-threonyl-[protein] + ATP = O-phospho-L-threonyl-[protein] + ADP + H(+). Its activity is regulated as follows. Kinase activity is activated upon binding to GTP-bound Rho/Rac GTPases. Activated by lipids, particularly cardiolipin and to a lesser extent by other acidic phospholipids and unsaturated fatty acids. Two specific sites, Thr-809 (activation loop of the kinase domain) and Thr-951 (turn motif), may be needed to be phosphorylated for its full activation. In terms of biological role, pkc-related serine/threonine-protein kinase and Rho/Rac effector protein that participates in specific signal transduction responses in the cell. May play a role in the regulation of cell cycle progression, actin cytoskeleton assembly, cell migration, cell adhesion and transcription activation signaling processes. This chain is Serine/threonine-protein kinase N2 (pkn2), found in Danio rerio (Zebrafish).